A 156-amino-acid polypeptide reads, in one-letter code: Myosin, essential light chain, adductor muscle (156 aa).

EF-hand domains lie at Asp-6–Asn-43 and Gly-81–Arg-116.

In terms of biological role, in molluscan muscle, calcium regulation is associated with myosin rather than with actin. Muscle myosin contains two types of light chains: the catalytic light chain, essential for ATPase activity, and the regulatory light chain, a calcium-binding protein responsible for Ca(2+) dependent binding and Ca(2+) dependent Mg-ATPase activity. This Mizuhopecten yessoensis (Japanese scallop) protein is Myosin, essential light chain, adductor muscle.